Consider the following 161-residue polypeptide: 6,7-dimethyl-8-ribityllumazine synthase (161 aa).

5-amino-6-(D-ribitylamino)uracil contacts are provided by residues tryptophan 31, 65 to 67 (TFE), and 89 to 91 (CVV). Residue 94–95 (DT) participates in (2S)-2-hydroxy-3-oxobutyl phosphate binding. The active-site Proton donor is the histidine 97. Phenylalanine 122 is a binding site for 5-amino-6-(D-ribitylamino)uracil. Residue arginine 136 coordinates (2S)-2-hydroxy-3-oxobutyl phosphate.

The protein belongs to the DMRL synthase family.

It catalyses the reaction (2S)-2-hydroxy-3-oxobutyl phosphate + 5-amino-6-(D-ribitylamino)uracil = 6,7-dimethyl-8-(1-D-ribityl)lumazine + phosphate + 2 H2O + H(+). The protein operates within cofactor biosynthesis; riboflavin biosynthesis; riboflavin from 2-hydroxy-3-oxobutyl phosphate and 5-amino-6-(D-ribitylamino)uracil: step 1/2. Catalyzes the formation of 6,7-dimethyl-8-ribityllumazine by condensation of 5-amino-6-(D-ribitylamino)uracil with 3,4-dihydroxy-2-butanone 4-phosphate. This is the penultimate step in the biosynthesis of riboflavin. The sequence is that of 6,7-dimethyl-8-ribityllumazine synthase from Porphyromonas gingivalis (strain ATCC 33277 / DSM 20709 / CIP 103683 / JCM 12257 / NCTC 11834 / 2561).